The primary structure comprises 299 residues: Streptogrisin-B (299 aa).

An N-terminal signal peptide occupies residues 1-38 (MRIKRTSNRSNAARRVRTTAVLAGLAAVAALAVPTANA). Residues 39-114 (ETPRTFSANQ…ERTPGKFTKL (76 aa)) constitute a propeptide that is removed on maturation. Cysteines 128 and 148 form a disulfide. Catalysis depends on charge relay system residues H147, D177, and S255. C249 and C276 are disulfide-bonded.

Belongs to the peptidase S1 family. As to quaternary structure, monomer.

It carries out the reaction Hydrolysis of proteins with trypsin-like specificity.. Its function is as follows. Has a primary specificity for large aliphatic or aromatic amino acids. The polypeptide is Streptogrisin-B (sprB) (Streptomyces griseus).